The chain runs to 236 residues: Ribose-5-phosphate isomerase A (236 aa).

Substrate is bound by residues 28-31 (TGST), 83-86 (DGAD), and 96-99 (KGGG). Residue E105 is the Proton acceptor of the active site. Residue K123 coordinates substrate.

Belongs to the ribose 5-phosphate isomerase family. As to quaternary structure, homodimer.

It carries out the reaction aldehydo-D-ribose 5-phosphate = D-ribulose 5-phosphate. The protein operates within carbohydrate degradation; pentose phosphate pathway; D-ribose 5-phosphate from D-ribulose 5-phosphate (non-oxidative stage): step 1/1. Catalyzes the reversible conversion of ribose-5-phosphate to ribulose 5-phosphate. In Afipia carboxidovorans (strain ATCC 49405 / DSM 1227 / KCTC 32145 / OM5) (Oligotropha carboxidovorans), this protein is Ribose-5-phosphate isomerase A.